The sequence spans 361 residues: Phospho-N-acetylmuramoyl-pentapeptide-transferase (361 aa).

10 consecutive transmembrane segments (helical) span residues 28 to 48, 74 to 94, 99 to 119, 133 to 153, 168 to 188, 203 to 223, 236 to 256, 263 to 283, 288 to 308, and 338 to 358; these read LAII…IKFL, TMGG…LADL, IWIT…DDYA, SKFL…EYLD, LSLD…VGSS, VPIA…GNLI, TGEL…FLWF, VFMG…ISVI, IVLA…ILQV, and KVVI…LSSL.

The protein belongs to the glycosyltransferase 4 family. MraY subfamily. It depends on Mg(2+) as a cofactor.

It localises to the cell inner membrane. The enzyme catalyses UDP-N-acetyl-alpha-D-muramoyl-L-alanyl-gamma-D-glutamyl-meso-2,6-diaminopimeloyl-D-alanyl-D-alanine + di-trans,octa-cis-undecaprenyl phosphate = di-trans,octa-cis-undecaprenyl diphospho-N-acetyl-alpha-D-muramoyl-L-alanyl-D-glutamyl-meso-2,6-diaminopimeloyl-D-alanyl-D-alanine + UMP. Its pathway is cell wall biogenesis; peptidoglycan biosynthesis. Catalyzes the initial step of the lipid cycle reactions in the biosynthesis of the cell wall peptidoglycan: transfers peptidoglycan precursor phospho-MurNAc-pentapeptide from UDP-MurNAc-pentapeptide onto the lipid carrier undecaprenyl phosphate, yielding undecaprenyl-pyrophosphoryl-MurNAc-pentapeptide, known as lipid I. In Rickettsia prowazekii (strain Madrid E), this protein is Phospho-N-acetylmuramoyl-pentapeptide-transferase.